The following is a 210-amino-acid chain: 2-Cys peroxiredoxin BAS1, chloroplastic (210 aa).

Residues 1-10 constitute a chloroplast transit peptide; sequence DARARSFVAR. The Thioredoxin domain maps to 18-177; the sequence is PLVGNKAPDF…TLRTLQALQY (160 aa). Residue cysteine 64 is the Cysteine sulfenic acid (-SOH) intermediate of the active site.

This sequence belongs to the peroxiredoxin family. AhpC/Prx1 subfamily. As to quaternary structure, homodimer; disulfide-linked, upon oxidation. In terms of tissue distribution, expressed in leaf blade, sheath, basiplast, stem and green spike. Maximal expression in young developing shoots segments where cell division and elongation take place. Not expressed in roots.

Its subcellular location is the plastid. The protein localises to the chloroplast. It catalyses the reaction a hydroperoxide + [thioredoxin]-dithiol = an alcohol + [thioredoxin]-disulfide + H2O. Its function is as follows. Thiol-specific peroxidase that catalyzes the reduction of hydrogen peroxide and organic hydroperoxides to water and alcohols, respectively. Plays a role in cell protection against oxidative stress by detoxifying peroxides. May be an antioxidant enzyme particularly in the developing shoot and photosynthesizing leaf. The polypeptide is 2-Cys peroxiredoxin BAS1, chloroplastic (BAS1) (Hordeum vulgare (Barley)).